Reading from the N-terminus, the 164-residue chain is Phosphopantetheine adenylyltransferase (164 aa).

Thr-9 lines the substrate pocket. ATP contacts are provided by residues 9 to 10 (TF) and His-17. Substrate contacts are provided by Lys-41, Leu-73, and Arg-87. Residues 88–90 (GLR), Glu-98, and 123–129 (YMFISAT) contribute to the ATP site.

This sequence belongs to the bacterial CoaD family. In terms of assembly, homohexamer. Mg(2+) serves as cofactor.

It is found in the cytoplasm. The enzyme catalyses (R)-4'-phosphopantetheine + ATP + H(+) = 3'-dephospho-CoA + diphosphate. Its pathway is cofactor biosynthesis; coenzyme A biosynthesis; CoA from (R)-pantothenate: step 4/5. Functionally, reversibly transfers an adenylyl group from ATP to 4'-phosphopantetheine, yielding dephospho-CoA (dPCoA) and pyrophosphate. This is Phosphopantetheine adenylyltransferase from Nitrosomonas eutropha (strain DSM 101675 / C91 / Nm57).